A 413-amino-acid chain; its full sequence is 26S proteasome regulatory subunit 6B homolog (413 aa).

Positions Met-1–Asp-30 are disordered. Residues Glu-32–Val-80 are a coiled coil. Gly-201 to Thr-208 is a binding site for ATP.

The protein belongs to the AAA ATPase family.

Its subcellular location is the cytoplasm. It localises to the nucleus. Its function is as follows. The 26S proteasome is involved in the ATP-dependent degradation of ubiquitinated proteins. The regulatory (or ATPase) complex confers ATP dependency and substrate specificity to the 26S complex. The chain is 26S proteasome regulatory subunit 6B homolog from Solanum tuberosum (Potato).